The sequence spans 110 residues: Small ribosomal subunit protein bS16 (110 aa).

The disordered stretch occupies residues 84-110; that stretch reads KRTARNNPEKAVPRKERKAQAEAAAKS. Residues 90–103 show a composition bias toward basic and acidic residues; it reads NPEKAVPRKERKAQ.

Belongs to the bacterial ribosomal protein bS16 family.

The protein is Small ribosomal subunit protein bS16 of Nitrobacter hamburgensis (strain DSM 10229 / NCIMB 13809 / X14).